Here is a 210-residue protein sequence, read N- to C-terminus: Imidazole glycerol phosphate synthase subunit HisH (210 aa).

Positions 7–210 (KVVIIDTGCA…SQLIKNFLEM (204 aa)) constitute a Glutamine amidotransferase type-1 domain. Cys-82 serves as the catalytic Nucleophile. Residues His-192 and Glu-194 contribute to the active site.

In terms of assembly, heterodimer of HisH and HisF.

The protein resides in the cytoplasm. The enzyme catalyses 5-[(5-phospho-1-deoxy-D-ribulos-1-ylimino)methylamino]-1-(5-phospho-beta-D-ribosyl)imidazole-4-carboxamide + L-glutamine = D-erythro-1-(imidazol-4-yl)glycerol 3-phosphate + 5-amino-1-(5-phospho-beta-D-ribosyl)imidazole-4-carboxamide + L-glutamate + H(+). It catalyses the reaction L-glutamine + H2O = L-glutamate + NH4(+). The protein operates within amino-acid biosynthesis; L-histidine biosynthesis; L-histidine from 5-phospho-alpha-D-ribose 1-diphosphate: step 5/9. Functionally, IGPS catalyzes the conversion of PRFAR and glutamine to IGP, AICAR and glutamate. The HisH subunit catalyzes the hydrolysis of glutamine to glutamate and ammonia as part of the synthesis of IGP and AICAR. The resulting ammonia molecule is channeled to the active site of HisF. The chain is Imidazole glycerol phosphate synthase subunit HisH from Photobacterium profundum (strain SS9).